A 189-amino-acid polypeptide reads, in one-letter code: Phomopsin biosynthesis cluster protein C' (189 aa).

It belongs to the oryJ family.

In terms of biological role, part of the gene cluster that mediates the biosynthesis of the phomopsins, a group of hexapeptide mycotoxins which infects lupins and causes lupinosis disease in livestock. The role of phomC' within the phomopsins biosynthesis pathway has still to be determined. The pathway starts with the processing of the precursor phomA by several endopeptidases including kexin proteases as well as the cluster-specific S41 family peptidase phomP1 and the oligopeptidase phomG to produce 10 identical copies of the hexapeptide Tyr-Val-Ile-Pro-Ile-Asp. After being excised from the precursor peptide, the core peptides are cyclized and modified post-translationally by enzymes encoded within the gene cluster. The timing and order of proteolysis of the phomA precursor and PTMs are still unknown. Two tyrosinase-like enzymes, phomQ1 and phomQ2, catalyze the chlorination and hydroxylation of Tyr, respectively. PhomYb, is proposed to be involved in the construction of the macrocyclic structure. The other 4 ustYa family proteins may be involved in PTMs that generate the unique structure of phomopsin A. PhomYa is required for the hydroxylation of C-beta of Tyr. PhomYc, phomYd, and phomYe are responsible for the biosynthesis of 2,3-dehydroisoleucine (dIle), 2,3-dehydroaspartic acid (dAsp), and 3,4-dehydroproline (dPro), respectively. While dIle formation by phomYc is indispensable for the installation of dAsp by phomYd, the order of the other PTMs have not been elucidated yet. Most of the biosynthetic enzymes likely have broad substrate specificity, and thus, there might be a metabolic grid from a precursor to phomopsin A. The enzyme(s) responsible for the biosynthesis of 3,4-dehydrovaline (dVal) have also not been identified yet. Finally, phomM acts as an S-adenosylmethionine-dependent alpha-N-methyltransferase that catalyzes two successive N-methylation reactions, converting N-desmethyl-phomopsin A to phomopsin A and phomopsin A further to an N,N-dimethylated congener called phomopsin E. This is Phomopsin biosynthesis cluster protein C' from Diaporthe leptostromiformis (Lupinosis disease fungus).